The sequence spans 88 residues: Small cysteine-rich outer membrane protein OmcA (88 aa).

A signal peptide spans 1-18 (MKKTALLAALCSVVSLSS). Cys19 carries the N-palmitoyl cysteine lipid modification. Cys19 is lipidated: S-diacylglycerol cysteine. The disordered stretch occupies residues 67–88 (THQDAEHGPQAREIPVDGKCRQ).

Part of a disulfide cross-linked outer membrane complex (COMC) composed of the major outer membrane porin (MOMP), the small cysteine-rich protein (OmcA) and the large cysteine-rich periplasmic protein (OmcB).

The protein localises to the cell outer membrane. Its function is as follows. In elementary bodies (EBs, the infectious stage, which is able to survive outside the host cell) provides the structural integrity of the outer envelope through disulfide cross-links with the large cysteine-rich periplasmic protein and the major outer membrane porin. It has been described in publications as the Sarkosyl-insoluble COMC (Chlamydia outer membrane complex), and serves as the functional equivalent of peptidoglycan. This is Small cysteine-rich outer membrane protein OmcA (omcA) from Chlamydia trachomatis serovar L2 (strain ATCC VR-902B / DSM 19102 / 434/Bu).